A 690-amino-acid polypeptide reads, in one-letter code: Proprotein convertase subtilisin/kexin type 9 (690 aa).

Positions M1–A28 are cleaved as a signal peptide. Residues Q29–Q150 constitute a propeptide that is removed on maturation. Y36 carries the sulfotyrosine modification. Phosphoserine is present on S45. An Inhibitor I9 domain is found at T75 to V147. Residues P153–W459 form the Peptidase S8 domain. Residues D184 and H224 each act as charge relay system in the active site. 2 disulfide bridges follow: C221-C253 and C321-C356. S384 serves as the catalytic Charge relay system. A C-terminal domain region spans residues G448 to Q690. Disulfide bonds link C455-C525, C475-C524, and C484-C507. N-linked (GlcNAc...) asparagine glycosylation is present at N531. Cystine bridges form between C532/C599, C550/C598, C560/C586, C606/C677, C624/C676, and C633/C652. A Phosphoserine modification is found at S686.

It belongs to the peptidase S8 family. As to quaternary structure, monomer. Can self-associate to form dimers and higher multimers which may have increased LDLR degrading activity. The precursor protein but not the mature protein may form multimers. Interacts with APOB, VLDLR, LRP8/APOER2 and BACE1. The full-length immature form (pro-PCSK9) interacts with SCNN1A, SCNN1B and SCNN1G. The pro-PCSK9 form (via C-terminal domain) interacts with LDLR. Interacts (via the C-terminal domain) with ANXA2 (via repeat Annexin 1); the interaction inhibits the degradation of LDLR. Ca(2+) is required as a cofactor. In terms of processing, cleavage by furin and PCSK5 generates a truncated inactive protein that is unable to induce LDLR degradation. Undergoes autocatalytic cleavage in the endoplasmic reticulum to release the propeptide from the N-terminus and the cleavage of the propeptide is strictly required for its maturation and activation. The cleaved propeptide however remains associated with the catalytic domain through non-covalent interactions, preventing potential substrates from accessing its active site. As a result, it is secreted from cells as a propeptide-containing, enzymatically inactive protein. Post-translationally, phosphorylation protects the propeptide against proteolysis.

It is found in the cytoplasm. Its subcellular location is the secreted. The protein resides in the endosome. It localises to the lysosome. The protein localises to the cell surface. It is found in the endoplasmic reticulum. Its subcellular location is the golgi apparatus. Its activity is regulated as follows. Its proteolytic activity is autoinhibited by the non-covalent binding of the propeptide to the catalytic domain. Inhibited by EGTA. Its function is as follows. Crucial player in the regulation of plasma cholesterol homeostasis. Binds to low-density lipid receptor family members: low density lipoprotein receptor (LDLR), very low density lipoprotein receptor (VLDLR), apolipoprotein E receptor (LRP1/APOER) and apolipoprotein receptor 2 (LRP8/APOER2), and promotes their degradation in intracellular acidic compartments. Acts via a non-proteolytic mechanism to enhance the degradation of the hepatic LDLR through a clathrin LDLRAP1/ARH-mediated pathway. May prevent the recycling of LDLR from endosomes to the cell surface or direct it to lysosomes for degradation. Can induce ubiquitination of LDLR leading to its subsequent degradation. Inhibits intracellular degradation of APOB via the autophagosome/lysosome pathway in a LDLR-independent manner. Involved in the disposal of non-acetylated intermediates of BACE1 in the early secretory pathway. Inhibits epithelial Na(+) channel (ENaC)-mediated Na(+) absorption by reducing ENaC surface expression primarily by increasing its proteasomal degradation. Regulates neuronal apoptosis via modulation of LRP8/APOER2 levels and related anti-apoptotic signaling pathways. The sequence is that of Proprotein convertase subtilisin/kexin type 9 (PCSK9) from Pongo pygmaeus (Bornean orangutan).